The following is a 96-amino-acid chain: Prokineticin Bm8-f (96 aa).

The first 19 residues, 1–19 (MKCFAQIVVLLLVIAFSHG), serve as a signal peptide directing secretion. 5 disulfides stabilise this stretch: C26–C38, C32–C50, C37–C78, C60–C86, and C80–C95.

The protein belongs to the AVIT (prokineticin) family. In terms of tissue distribution, expressed by the skin glands.

The protein resides in the secreted. Its function is as follows. Potent agonist for both PKR1/PROKR1 and PKR2/PROKR2, and inducer of a potent and long-lasting hyperalgesia. Also potentiates capsaicin-induced TRPV1 current, when tested on DRG neurons. At subnanomolar concentrations, this protein both induces potent chemotaxis of macrophages and stimulates LPS-induced production of the pro-inflammatory cytokines IL-1 and IL-12. In vivo, potently stimulates the contraction of the guinea-pig gastrointestinal (GI) smooth muscle (nanomolar concentration). The sequence is that of Prokineticin Bm8-f from Bombina maxima (Giant fire-bellied toad).